We begin with the raw amino-acid sequence, 105 residues long: MMQSFENVTVVKKANRYFDDKVTSRTVIFPDGSKKTLGIMLPGSYEFGTDKAEIMEILEGELEVFLPQESKWRTLRGGESFDVPAHSRFSLKVNETVDYCCSYVG.

This sequence belongs to the nucleoside phosphorylase PpnP family.

The catalysed reaction is a purine D-ribonucleoside + phosphate = a purine nucleobase + alpha-D-ribose 1-phosphate. It carries out the reaction adenosine + phosphate = alpha-D-ribose 1-phosphate + adenine. It catalyses the reaction cytidine + phosphate = cytosine + alpha-D-ribose 1-phosphate. The enzyme catalyses guanosine + phosphate = alpha-D-ribose 1-phosphate + guanine. The catalysed reaction is inosine + phosphate = alpha-D-ribose 1-phosphate + hypoxanthine. It carries out the reaction thymidine + phosphate = 2-deoxy-alpha-D-ribose 1-phosphate + thymine. It catalyses the reaction uridine + phosphate = alpha-D-ribose 1-phosphate + uracil. The enzyme catalyses xanthosine + phosphate = alpha-D-ribose 1-phosphate + xanthine. In terms of biological role, catalyzes the phosphorolysis of diverse nucleosides, yielding D-ribose 1-phosphate and the respective free bases. Can use uridine, adenosine, guanosine, cytidine, thymidine, inosine and xanthosine as substrates. Also catalyzes the reverse reactions. In Wolinella succinogenes (strain ATCC 29543 / DSM 1740 / CCUG 13145 / JCM 31913 / LMG 7466 / NCTC 11488 / FDC 602W) (Vibrio succinogenes), this protein is Pyrimidine/purine nucleoside phosphorylase.